Reading from the N-terminus, the 109-residue chain is Ribonuclease (109 aa).

Glu-72 (proton acceptor) is an active-site residue. Catalysis depends on His-101, which acts as the Proton donor.

This sequence belongs to the ribonuclease N1/T1 family.

It is found in the secreted. Hydrolyzes phosphodiester bonds in RNA, poly- and oligoribonucleotides resulting in 3'-nucleoside monophosphates via 2',3'-cyclophosphate intermediates. This chain is Ribonuclease, found in Heyndrickxia coagulans (Weizmannia coagulans).